Here is a 22-residue protein sequence, read N- to C-terminus: Proline-rich peptide (22 aa).

The interval 1 to 22 is disordered; it reads FVDRNRIPRSNNGPKIPIISNP.

Its subcellular location is the secreted. In terms of biological role, antibacterial peptide active against Gram-positive bacterium M.luteus and Gram-negative bacterium E.coli. The sequence is that of Proline-rich peptide from Calliphora vicina (Blue blowfly).